The following is a 341-amino-acid chain: MSRLSPVNQARWARFRHNRRGYWSLWIFLVLFGLSLCSELIANDKPLLVRYDGSWYFPLLKNYSESDFGGPLASQADYQDPWLKQRLENNGWVLWAPIRFGATSINFATNKPFPSPPSRQNWLGTDANGGDVLARILYGTRISVLFGLMLTLCSSVMGVLAGALQGYYGGKVDLWGQRFIEVWSGMPTLFLIILLSSVVQPNFWWLLAITVLFGWMSLVGVVRAEFLRTRNFDYIRAAQALGVSDRSIILRHMLPNAMVATLTFLPFILCSSITTLTSLDFLGFGLPLGSPSLGELLLQGKNNLQAPWLGITAFLSVAILLSLLIFIGEAVRDAFDPNKAV.

The Cytoplasmic portion of the chain corresponds to 1 to 21 (MSRLSPVNQARWARFRHNRRG). Residues 22-42 (YWSLWIFLVLFGLSLCSELIA) traverse the membrane as a helical segment. Topologically, residues 43 to 143 (NDKPLLVRYD…ARILYGTRIS (101 aa)) are periplasmic. Positions 140-332 (TRISVLFGLM…LLIFIGEAVR (193 aa)) constitute an ABC transmembrane type-1 domain. The chain crosses the membrane as a helical span at residues 144-164 (VLFGLMLTLCSSVMGVLAGAL). Residues 165–178 (QGYYGGKVDLWGQR) lie on the Cytoplasmic side of the membrane. A helical transmembrane segment spans residues 179–199 (FIEVWSGMPTLFLIILLSSVV). Over 200–201 (QP) the chain is Periplasmic. Residues 202 to 222 (NFWWLLAITVLFGWMSLVGVV) form a helical membrane-spanning segment. Residues 223–252 (RAEFLRTRNFDYIRAAQALGVSDRSIILRH) lie on the Cytoplasmic side of the membrane. The helical transmembrane segment at 253 to 273 (MLPNAMVATLTFLPFILCSSI) threads the bilayer. Topologically, residues 274-307 (TTLTSLDFLGFGLPLGSPSLGELLLQGKNNLQAP) are periplasmic. Residues 308 to 328 (WLGITAFLSVAILLSLLIFIG) traverse the membrane as a helical segment. Topologically, residues 329–341 (EAVRDAFDPNKAV) are cytoplasmic.

It belongs to the binding-protein-dependent transport system permease family. OppBC subfamily.

Its subcellular location is the cell inner membrane. Its function is as follows. Probably part of a binding-protein-dependent transport system. Probably responsible for the translocation of the substrate across the membrane. This chain is Inner membrane ABC transporter permease protein YejE (yejE), found in Escherichia coli (strain K12).